The primary structure comprises 118 residues: p-cumate 2,3-dioxygenase system, ferredoxin component (118 aa).

The 98-residue stretch at 14-111 folds into the Rieske domain; the sequence is VGLCATDDVA…VTVEGGQIFV (98 aa). Residues C54, H56, C74, and H77 each contribute to the [2Fe-2S] cluster site.

It belongs to the bacterial ring-hydroxylating dioxygenase ferredoxin component family. The p-cumate 2,3-dioxygenase multicomponent enzyme system is composed of an electron transfer component and a dioxygenase component (iron sulfur protein (ISP)). The electron transfer component is composed of a ferredoxin reductase (CmtAa) and a ferredoxin (CmtAd), and the dioxygenase component is formed of a large alpha subunit (CmtAb) and a small beta subunit (CmtAc). The cofactor is [2Fe-2S] cluster.

It participates in aromatic compound metabolism; p-cumate degradation; acetaldehyde and pyruvate from p-cumate. Its function is as follows. Component of the p-cumate 2,3-dioxygenase multicomponent enzyme system which catalyzes the incorporation of both atoms of molecular oxygen into p-cumate to form cis-2,3-dihydroxy-2,3-dihydro-p-cumate. Functions as an intermediate electron transfer protein via a specific interaction with iron sulfur protein components (ISP)(CmtAb and CmtAc). The protein is p-cumate 2,3-dioxygenase system, ferredoxin component of Pseudomonas putida (Arthrobacter siderocapsulatus).